A 433-amino-acid polypeptide reads, in one-letter code: 5-methylthioadenosine/S-adenosylhomocysteine deaminase (433 aa).

Residues His67 and His69 each coordinate Zn(2+). Substrate-binding residues include Glu96, Arg148, and His187. Zn(2+) is bound at residue His214. Substrate is bound by residues Glu217 and Asp302. Asp302 serves as a coordination point for Zn(2+).

This sequence belongs to the metallo-dependent hydrolases superfamily. MTA/SAH deaminase family. Requires Zn(2+) as cofactor.

It catalyses the reaction S-adenosyl-L-homocysteine + H2O + H(+) = S-inosyl-L-homocysteine + NH4(+). It carries out the reaction S-methyl-5'-thioadenosine + H2O + H(+) = S-methyl-5'-thioinosine + NH4(+). Catalyzes the deamination of 5-methylthioadenosine and S-adenosyl-L-homocysteine into 5-methylthioinosine and S-inosyl-L-homocysteine, respectively. Is also able to deaminate adenosine. In Carboxydothermus hydrogenoformans (strain ATCC BAA-161 / DSM 6008 / Z-2901), this protein is 5-methylthioadenosine/S-adenosylhomocysteine deaminase.